Here is a 446-residue protein sequence, read N- to C-terminus: Na(+)-translocating NADH-quinone reductase subunit A (446 aa).

This sequence belongs to the NqrA family. Composed of six subunits; NqrA, NqrB, NqrC, NqrD, NqrE and NqrF.

The enzyme catalyses a ubiquinone + n Na(+)(in) + NADH + H(+) = a ubiquinol + n Na(+)(out) + NAD(+). In terms of biological role, NQR complex catalyzes the reduction of ubiquinone-1 to ubiquinol by two successive reactions, coupled with the transport of Na(+) ions from the cytoplasm to the periplasm. NqrA to NqrE are probably involved in the second step, the conversion of ubisemiquinone to ubiquinol. The polypeptide is Na(+)-translocating NADH-quinone reductase subunit A (Pasteurella multocida (strain Pm70)).